A 355-amino-acid polypeptide reads, in one-letter code: 3-dehydroquinate synthase (355 aa).

NAD(+) is bound by residues 71-76 (EGEASK), 105-109 (GVVGD), 129-130 (TS), Lys142, Lys151, and 169-172 (TLKT). Zn(2+) is bound by residues Glu184, His246, and His263.

Belongs to the sugar phosphate cyclases superfamily. Dehydroquinate synthase family. Co(2+) serves as cofactor. Zn(2+) is required as a cofactor. It depends on NAD(+) as a cofactor.

It localises to the cytoplasm. The catalysed reaction is 7-phospho-2-dehydro-3-deoxy-D-arabino-heptonate = 3-dehydroquinate + phosphate. Its pathway is metabolic intermediate biosynthesis; chorismate biosynthesis; chorismate from D-erythrose 4-phosphate and phosphoenolpyruvate: step 2/7. Functionally, catalyzes the conversion of 3-deoxy-D-arabino-heptulosonate 7-phosphate (DAHP) to dehydroquinate (DHQ). In Streptococcus suis (strain 98HAH33), this protein is 3-dehydroquinate synthase.